The following is a 439-amino-acid chain: MANTTPAVVMDNGTGFSKLGFAGNDSPSFVFPTAIATKSPSAGTGGSGSGRPAVANKPSFLTGGAGPGGHLSAKRGTEDLDYFIGDEAVAAANGPGYGLHYPIRHGQIENWDHMERFWSNSIFKYLRVEPEDHHFLLTEPPLNPPENRENTAEIFFESFNCAGLYIAVQAVLALAASWTSSKVQDRSLTGTVIDSGDGVTHVIPVAEGYVIGSSIKSIPIAGRDITYFVQSLLRDRGEPDSSLKTAQEIKEEYCYVCPDIVKEFAKYDRDRSRFLKHTITQPGGRQVTVDVGYERFMAPEIFFNPEIYSSDFLTPLPVVVDGVIQSSPIDVRRGLYKNIVLSGGSTLYKDFGRRLQRDIKQLVDTRIKASEVRSGGAKSGGLDVQVITHKRQRHGPWFGGSLLGQTPEFRSYCHTKAEYQEYGPSIVRRFALLGGPGGS.

Residues P40–L71 are disordered.

Belongs to the actin family. ARP3 subfamily. In terms of assembly, component of the Arp2/3 complex composed.

The protein resides in the cytoplasm. Its subcellular location is the cytoskeleton. Functions as ATP-binding component of the Arp2/3 complex which is involved in regulation of actin polymerization and together with an activating nucleation-promoting factor (NPF) mediates the formation of branched actin networks. Seems to contact the pointed end of the daughter actin filament. The protein is Actin-related protein 3 (arp-3) of Neurospora crassa (strain ATCC 24698 / 74-OR23-1A / CBS 708.71 / DSM 1257 / FGSC 987).